The primary structure comprises 403 residues: Imidazolonepropionase (403 aa).

The Fe(3+) site is built by H69 and H71. H69 and H71 together coordinate Zn(2+). The 4-imidazolone-5-propanoate site is built by R78, Y141, and H174. Y141 lines the N-formimidoyl-L-glutamate pocket. H239 serves as a coordination point for Fe(3+). H239 contributes to the Zn(2+) binding site. Position 242 (Q242) interacts with 4-imidazolone-5-propanoate. D314 provides a ligand contact to Fe(3+). Residue D314 coordinates Zn(2+). N-formimidoyl-L-glutamate contacts are provided by N316 and G318. S319 is a 4-imidazolone-5-propanoate binding site.

It belongs to the metallo-dependent hydrolases superfamily. HutI family. It depends on Zn(2+) as a cofactor. Fe(3+) is required as a cofactor.

The protein resides in the cytoplasm. It carries out the reaction 4-imidazolone-5-propanoate + H2O = N-formimidoyl-L-glutamate. It participates in amino-acid degradation; L-histidine degradation into L-glutamate; N-formimidoyl-L-glutamate from L-histidine: step 3/3. Functionally, catalyzes the hydrolytic cleavage of the carbon-nitrogen bond in imidazolone-5-propanoate to yield N-formimidoyl-L-glutamate. It is the third step in the universal histidine degradation pathway. The chain is Imidazolonepropionase from Legionella pneumophila (strain Paris).